A 287-amino-acid chain; its full sequence is 4,4'-diapophytoene synthase (287 aa).

(2E,6E)-farnesyl diphosphate contacts are provided by residues 18 to 21 (HSKS), Y41, and R45. The Mg(2+) site is built by D48 and D52. A (2E,6E)-farnesyl diphosphate-binding site is contributed by Q165. N168 contributes to the Mg(2+) binding site. Residue R171 participates in (2E,6E)-farnesyl diphosphate binding. Mg(2+) is bound at residue D172. Y248 provides a ligand contact to (2E,6E)-farnesyl diphosphate.

It belongs to the phytoene/squalene synthase family. CrtM subfamily. Mg(2+) is required as a cofactor.

The catalysed reaction is 2 (2E,6E)-farnesyl diphosphate = 15-cis-4,4'-diapophytoene + 2 diphosphate. It functions in the pathway carotenoid biosynthesis; staphyloxanthin biosynthesis; staphyloxanthin from farnesyl diphosphate: step 1/5. Its function is as follows. Involved in the biosynthesis of the yellow-orange carotenoid staphyloxanthin, which plays a role in the virulence via its protective function against oxidative stress. Catalyzes the head-to-head condensation of two molecules of farnesyl diphosphate (FPP) into the colorless C(30) carotenoid 4,4'-diapophytoene (dehydrosqualene). The sequence is that of 4,4'-diapophytoene synthase (crtM) from Staphylococcus aureus (strain bovine RF122 / ET3-1).